The following is a 245-amino-acid chain: Small ribosomal subunit protein uS2 (245 aa).

It belongs to the universal ribosomal protein uS2 family.

This is Small ribosomal subunit protein uS2 from Pseudomonas fluorescens (strain SBW25).